The sequence spans 1367 residues: Mediator of RNA polymerase II transcription subunit 23 (1367 aa).

Positions 1343-1367 (PPQALNSGSPAPQSNQVPASLPVTQ) are disordered. A compositionally biased stretch (polar residues) spans 1346–1367 (ALNSGSPAPQSNQVPASLPVTQ).

Belongs to the Mediator complex subunit 23 family. Component of the Mediator complex, which is composed of MED1, MED4, MED6, MED7, MED8, MED9, MED10, MED11, MED12, MED13, MED13L, MED14, MED15, MED16, MED17, MED18, MED19, MED20, MED21, MED22, MED23, MED24, MED25, MED26, MED27, MED29, MED30, MED31, CCNC, CDK8 and CDC2L6/CDK11. The MED12, MED13, CCNC and CDK8 subunits form a distinct module termed the CDK8 module. Mediator containing the CDK8 module is less active than Mediator lacking this module in supporting transcriptional activation. Individual preparations of the Mediator complex lacking one or more distinct subunits have been variously termed ARC, CRSP, DRIP, PC2, SMCC and TRAP. Interacts with CEBPB (when not methylated), CTNNB1, and GLI3. Interacts with CDK8 and ELK1.

It is found in the nucleus. Functionally, component of the Mediator complex, a coactivator involved in the regulated transcription of nearly all RNA polymerase II-dependent genes. Mediator functions as a bridge to convey information from gene-specific regulatory proteins to the basal RNA polymerase II transcription machinery. Mediator is recruited to promoters by direct interactions with regulatory proteins and serves as a scaffold for the assembly of a functional pre-initiation complex with RNA polymerase II and the general transcription factors. Also required for transcriptional activation subsequent to the assembly of the pre-initiation complex. Required for transcriptional activation by adenovirus E1A protein. Required for ELK1-dependent transcriptional activation in response to activated Ras signaling. This chain is Mediator of RNA polymerase II transcription subunit 23 (Med23), found in Mus musculus (Mouse).